The primary structure comprises 217 residues: Peroxiredoxin Q, chloroplastic (217 aa).

A chloroplast-targeting transit peptide spans 1–65 (MAAICLPVAK…PPPSYSARIS (65 aa)). The 148-residue stretch at 70–217 (VSKGSVPPQF…DETLKFLQSA (148 aa)) folds into the Thioredoxin domain. The active-site Cysteine sulfenic acid (-SOH) intermediate is the C112. A disulfide bond links C112 and C117.

This sequence belongs to the peroxiredoxin family. BCP/PrxQ subfamily. As to quaternary structure, monomer. Expressed in the leaves, roots and stems.

It localises to the plastid. The protein localises to the chloroplast thylakoid lumen. It catalyses the reaction a hydroperoxide + [thioredoxin]-dithiol = an alcohol + [thioredoxin]-disulfide + H2O. Functionally, thiol-specific peroxidase that catalyzes the reduction of hydrogen peroxide and organic hydroperoxides to water and alcohols, respectively. Plays a role in cell protection against oxidative stress by detoxifying peroxides. Involved in both resistance against fungal disease and oxidative stress. In Gentiana triflora (Clustered gentian), this protein is Peroxiredoxin Q, chloroplastic (AFP1).